Here is a 148-residue protein sequence, read N- to C-terminus: Large ribosomal subunit protein uL22 (148 aa).

This sequence belongs to the universal ribosomal protein uL22 family. Part of the 50S ribosomal subunit.

This protein binds specifically to 23S rRNA; its binding is stimulated by other ribosomal proteins, e.g. L4, L17, and L20. It is important during the early stages of 50S assembly. It makes multiple contacts with different domains of the 23S rRNA in the assembled 50S subunit and ribosome. Functionally, the globular domain of the protein is located near the polypeptide exit tunnel on the outside of the subunit, while an extended beta-hairpin is found that lines the wall of the exit tunnel in the center of the 70S ribosome. This chain is Large ribosomal subunit protein uL22, found in Thermosipho africanus (strain TCF52B).